Reading from the N-terminus, the 126-residue chain is UPF0344 protein ABC2900 (126 aa).

4 helical membrane-spanning segments follow: residues 16 to 36 (ASHE…YFLF), 43 to 63 (AGTI…VTGA), 66 to 86 (LIAY…VLLI), and 104 to 124 (GMLF…YGII).

The protein belongs to the UPF0344 family.

It localises to the cell membrane. This Shouchella clausii (strain KSM-K16) (Alkalihalobacillus clausii) protein is UPF0344 protein ABC2900.